We begin with the raw amino-acid sequence, 1053 residues long: MIYKLAARYPIQVIAIVGILVSMAYFSFLEALTQEDFPVLIRALKRFGILDGFPNTRLPNEMILKLSSVQGEDASVWEQIPAAELGGEGFVDFDITQWYYPANAKVDVAQLVEPYRNDCIFHDASGACHFFFKEVGNWTVSSIALPSNLANPPIDYFLDSSSTVIQRILPAIREHGISWSWLLQLIARTWMNTLKIASQASKTELLIVGTAYACMLISIVSLYLKMRRLGSKFWLFFSVLLSTLFSVQFAMTLVRASGVRISLVSLIESLPFLINVVALDKAAELTRQVITRCSVSDSHSPMHEDIAKACRNAAPPILRHFSFGIVVLAIFSYCNFGIKQFFLFAAVMIYDLLLLFSFFVAILTLKLEMRRYNAKDDVRKVLIEEGLSESTARHVADGNDSSATTSAGSRYFKVRYGTKIILFIFIAFNLFELCSIPFKHYAATSAAAARLIPLVRSQYPDFKSQRLLDDGVFDDVLSAISSMSNIESPSVRLLPAVFYGAELSSTSFLSTIHSFINNWSHYISASFLSKWIVCALSLSIAVNVFLLNAARLNSIKEEPEKKVVEKVVEVVKYIPSSNSSSIDDIQKDEIAQESVVRSLEECITLYNNGQISTLNDEEVVQLTLAKKIPLYALERVLKDVTRAVVIRRTVVSRSSRTKTLESSNCPVYHYDYSRVLNACCENVIGYMPLPLGVAGPLIIDGKPFYIPMATTEGALVASTMRGCKAINAGGGAVTVLTRDQMSRGPCVAFPNLTRAGRAKIWLDSPEGQEVMKKAFNSTSRFARLQHIKTALAGTRLFIRFCTSTGDAMGMNMISKGVEHALVVMSNDAGFDDMQVISVSGNYCTDKKPAAINWIDGRGKSVIAEAIIPGDAVKSVLKTTVEDLVKLNVDKNLIGSAMAGSVGGFNAHAANIVTAVYLATGQDPAQNVESSNCITLMDNVDGNLQLSVSMPSIEVGTIGGGTVLEPQGAMLDLLGVRGAHMTSPGDNSRQLARVVAAAVMAGELSLCSALASGHLVKSHIGLNRSALNTPAMDSSAKKPATDALKSVNSRVPGR.

Residues 1 to 8 (MIYKLAAR) are Cytoplasmic-facing. A helical transmembrane segment spans residues 9–29 (YPIQVIAIVGILVSMAYFSFL). Residues 30-203 (EALTQEDFPV…LKIASQASKT (174 aa)) are Lumenal-facing. N-linked (GlcNAc...) asparagine glycosylation occurs at N137. A helical membrane pass occupies residues 204–224 (ELLIVGTAYACMLISIVSLYL). The SSD domain occupies 204 to 365 (ELLIVGTAYA…FSFFVAILTL (162 aa)). The Cytoplasmic segment spans residues 225–232 (KMRRLGSK). Residues 233 to 253 (FWLFFSVLLSTLFSVQFAMTL) traverse the membrane as a helical segment. Over 254–258 (VRASG) the chain is Lumenal. A helical transmembrane segment spans residues 259–279 (VRISLVSLIESLPFLINVVAL). The Cytoplasmic portion of the chain corresponds to 280–320 (DKAAELTRQVITRCSVSDSHSPMHEDIAKACRNAAPPILRH). 2 helical membrane-spanning segments follow: residues 321–341 (FSFG…IKQF) and 342–362 (FLFA…FVAI). The Cytoplasmic segment spans residues 363–417 (LTLKLEMRRYNAKDDVRKVLIEEGLSESTARHVADGNDSSATTSAGSRYFKVRYG). A helical transmembrane segment spans residues 418 to 438 (TKIILFIFIAFNLFELCSIPF). Over 439 to 526 (KHYAATSAAA…NNWSHYISAS (88 aa)) the chain is Lumenal. Residue N518 is glycosylated (N-linked (GlcNAc...) asparagine). The helical transmembrane segment at 527–547 (FLSKWIVCALSLSIAVNVFLL) threads the bilayer. At 548 to 1053 (NAARLNSIKE…KSVNSRVPGR (506 aa)) the chain is on the cytoplasmic side. The active-site Charge relay system is E712. 718-724 (STMRGCK) provides a ligand contact to CoA. NADP(+)-binding positions include 779–781 (SRF) and 806–814 (DAMGMNMIS). The active-site Charge relay system is K846. Residue 875–877 (VLK) participates in CoA binding. The active-site Charge relay system is the D922. 1017–1018 (SH) serves as a coordination point for CoA. H1018 (proton donor) is an active-site residue. Residue 1022 to 1023 (NR) coordinates NADP(+). S1024 is subject to Phosphoserine. T1028 is modified (phosphothreonine). The segment at 1028 to 1053 (TPAMDSSAKKPATDALKSVNSRVPGR) is disordered.

This sequence belongs to the HMG-CoA reductase family.

It localises to the endoplasmic reticulum membrane. It is found in the nucleus envelope. The catalysed reaction is (R)-mevalonate + 2 NADP(+) + CoA = (3S)-3-hydroxy-3-methylglutaryl-CoA + 2 NADPH + 2 H(+). The protein operates within metabolic intermediate biosynthesis; (R)-mevalonate biosynthesis; (R)-mevalonate from acetyl-CoA: step 3/3. In terms of biological role, part of the first module of ergosterol biosynthesis pathway that includes the early steps of the pathway, conserved across all eukaryotes, and which results in the formation of mevalonate from acetyl-coenzyme A (acetyl-CoA). Hmg1 catalyzes the reduction of hydroxymethylglutaryl-CoA (HMG-CoA) to mevalonate. The first module starts with the action of the cytosolic acetyl-CoA acetyltransferase eg10 that catalyzes the formation of acetoacetyl-CoA. The hydroxymethylglutaryl-CoA synthases erg13 then condenses acetyl-CoA with acetoacetyl-CoA to form HMG-CoA. The rate-limiting step of the early module is the reduction to mevalonate by the 3-hydroxy-3-methylglutaryl-coenzyme A (HMG-CoA) reductases hcs1. In Schizosaccharomyces pombe (strain 972 / ATCC 24843) (Fission yeast), this protein is 3-hydroxy-3-methylglutaryl-coenzyme A reductase.